Consider the following 369-residue polypeptide: Protein VP6 (369 aa).

2 disordered regions span residues 17-169 (KREL…LQGR) and 184-208 (LDRI…GGDR). The segment covering 29 to 68 (LREKGSTEAKSKLKEDGEKKNKSEKEENKIHDDRRVESQK) has biased composition (basic and acidic residues). Gly residues predominate over residues 92–111 (TGGGDGSAGARTGIGGGGVG). Composition is skewed to basic and acidic residues over residues 137-148 (TGADRVANDDAT) and 196-208 (TEGE…GGDR).

This sequence belongs to the orbivirus VP6 family.

It localises to the virion. This African horse sickness virus (AHSV) protein is Protein VP6 (Segment-9).